The following is a 324-amino-acid chain: Olfactory receptor 8U3 (324 aa).

Over 1–25 (MAEVNIIYVTVFILKGITNRPELQA) the chain is Extracellular. The chain crosses the membrane as a helical span at residues 26–46 (PCFGVFLVIYLVTVLGNLGLI). Topologically, residues 47-54 (TLIKIDTR) are cytoplasmic. Residues 55–75 (LHTPMYYFLSHLAFVDLCYSS) form a helical membrane-spanning segment. Over 76–99 (AITPKMMVNFVVERNTIPFHACAT) the chain is Extracellular. Residues Cys-97 and Cys-189 are joined by a disulfide bond. Residues 100 to 120 (QLGCFLTFMITECFLLASMAY) form a helical membrane-spanning segment. Residues 121-139 (DCYVAICSPLHYSTLMSRR) are Cytoplasmic-facing. Residues 140–160 (VCIQLVAVPYIYSFLVALFHT) form a helical membrane-spanning segment. Over 161–196 (VITFRLTYCGPNLINHFYCDDLPFLALSCSDTHMKE) the chain is Extracellular. The helical transmembrane segment at 197 to 217 (ILIFAFAGFDMISSSSIVLTS) threads the bilayer. The Cytoplasmic portion of the chain corresponds to 218 to 237 (YIFIIAAILRIRSTQGQHKA). The helical transmembrane segment at 238-258 (ISTCGSHMVTVTIFYGTLIFM) threads the bilayer. The Extracellular portion of the chain corresponds to 259–271 (YLQPKSNHSLDTD). Residue Asn-265 is glycosylated (N-linked (GlcNAc...) asparagine). The chain crosses the membrane as a helical span at residues 272–292 (KMASVFYTVVIPMLNPLIYSL). Residues 293-324 (RNKEVKDASKKALDKGCENLQILTFLKIRKLY) are Cytoplasmic-facing.

It belongs to the G-protein coupled receptor 1 family.

The protein resides in the cell membrane. Functionally, odorant receptor. The polypeptide is Olfactory receptor 8U3 (Homo sapiens (Human)).